A 128-amino-acid polypeptide reads, in one-letter code: Small ribosomal subunit protein uS11 (128 aa).

The protein belongs to the universal ribosomal protein uS11 family. Part of the 30S ribosomal subunit. Interacts with proteins S7 and S18. Binds to IF-3.

Its function is as follows. Located on the platform of the 30S subunit, it bridges several disparate RNA helices of the 16S rRNA. Forms part of the Shine-Dalgarno cleft in the 70S ribosome. This is Small ribosomal subunit protein uS11 from Vesicomyosocius okutanii subsp. Calyptogena okutanii (strain HA).